The following is a 1065-amino-acid chain: DNA ligase 4 (1065 aa).

Positions 1–20 (MAVHAPYNHAPPPTQEINGQ) are disordered. The ATP site is built by Glu-295, Lys-297, Leu-298, Arg-302, Glu-357, Phe-387, Glu-452, Lys-457, Lys-474, and Lys-476. Lys-297 serves as the catalytic N6-AMP-lysine intermediate. Glu-357 contacts Mg(2+). Mg(2+) is bound at residue Glu-452. A BRCT 1 domain is found at 696–775 (VETSIFSDMT…TALPFLKEFL (80 aa)). Residues 825-928 (GEDKDEIDVE…SDVGVNGDDY (104 aa)) form a disordered region. 2 stretches are compositionally biased toward basic and acidic residues: residues 834–864 (EESR…KKLQ) and 886–900 (MSLK…ERSR). A BRCT 2 domain is found at 954–1064 (DEDRIFYHLA…TLLDEDLYKP (111 aa)).

Belongs to the ATP-dependent DNA ligase family. It depends on Mg(2+) as a cofactor.

It localises to the nucleus. The catalysed reaction is ATP + (deoxyribonucleotide)n-3'-hydroxyl + 5'-phospho-(deoxyribonucleotide)m = (deoxyribonucleotide)n+m + AMP + diphosphate.. Functionally, DNA ligase involved in DNA non-homologous end joining (NHEJ); required for double-strand break (DSB) repair. This Cryptococcus neoformans var. neoformans serotype D (strain B-3501A) (Filobasidiella neoformans) protein is DNA ligase 4 (LIG4).